We begin with the raw amino-acid sequence, 366 residues long: Histidinol-phosphate aminotransferase 2 (366 aa).

Residue Lys226 is modified to N6-(pyridoxal phosphate)lysine.

It belongs to the class-II pyridoxal-phosphate-dependent aminotransferase family. Histidinol-phosphate aminotransferase subfamily. Homodimer. It depends on pyridoxal 5'-phosphate as a cofactor.

It catalyses the reaction L-histidinol phosphate + 2-oxoglutarate = 3-(imidazol-4-yl)-2-oxopropyl phosphate + L-glutamate. It functions in the pathway amino-acid biosynthesis; L-histidine biosynthesis; L-histidine from 5-phospho-alpha-D-ribose 1-diphosphate: step 7/9. This chain is Histidinol-phosphate aminotransferase 2, found in Haemophilus influenzae (strain 86-028NP).